A 115-amino-acid chain; its full sequence is Large ribosomal subunit protein P2x (115 aa).

Residues 78-115 form a disordered region; the sequence is GGGGGAASAAEPVAESKKKVEEVKDESSDDAGMMGLFD. The segment covering 91 to 103 has biased composition (basic and acidic residues); the sequence is AESKKKVEEVKDE. A phosphoserine mark is found at serine 104 and serine 105.

This sequence belongs to the eukaryotic ribosomal protein P1/P2 family. In terms of assembly, P1 and P2 exist as dimers at the large ribosomal subunit.

Its function is as follows. Plays an important role in the elongation step of protein synthesis. The polypeptide is Large ribosomal subunit protein P2x (RPP2C) (Arabidopsis thaliana (Mouse-ear cress)).